The following is a 257-amino-acid chain: MQRVDLNSDLGESFGAYTIGQDDRVLEHVTSANIACGYHAGDHNVMARTVKLAADKGMGIGAHPGFPDLLGFGRRNIQTDHKDIYNFIVYQVAALNGFCQLHRVRMQHVKPHGALYNMAAKDRVIAEAIAEAIYDIDPSLILFGLSGSELIKAGKKLGLTVANEVFADRTYQPDGTLTPRSEANALIKESERATEQVIQMVKESKVIAVDGSHIPIEADTICVHGDSPTALSFIERLHAQLQVEGVTVTKVSDFLFK.

The protein belongs to the LamB/PxpA family. As to quaternary structure, forms a complex composed of PxpA, PxpB and PxpC.

It catalyses the reaction 5-oxo-L-proline + ATP + 2 H2O = L-glutamate + ADP + phosphate + H(+). Its function is as follows. Catalyzes the cleavage of 5-oxoproline to form L-glutamate coupled to the hydrolysis of ATP to ADP and inorganic phosphate. The polypeptide is 5-oxoprolinase subunit A (Halalkalibacterium halodurans (strain ATCC BAA-125 / DSM 18197 / FERM 7344 / JCM 9153 / C-125) (Bacillus halodurans)).